The chain runs to 312 residues: Olfactory receptor 4K17 (312 aa).

Residues 1-25 (MKLLNQSQVSEFILLGLTSSQDVEF) lie on the Extracellular side of the membrane. Asn5 carries N-linked (GlcNAc...) asparagine glycosylation. Residues 26 to 49 (LLFALFSVIYVVTVLGNLLIIVTV) form a helical membrane-spanning segment. The Cytoplasmic segment spans residues 50-57 (FNTPNLNT). The chain crosses the membrane as a helical span at residues 58–79 (PMYFLLGNLSFVDMTLASFATP). The Extracellular portion of the chain corresponds to 80 to 100 (KVILNLLKKQKVISFAGCFTQ). Residues Cys97 and Cys189 are joined by a disulfide bond. Residues 101-120 (IFLLHLLGGVEMVLLVSMAF) form a helical membrane-spanning segment. Residues 121–139 (DRYVAICKPLHYMTIMNKK) are Cytoplasmic-facing. A helical transmembrane segment spans residues 140-158 (VCVLLVVTSWLLGLLHSGF). The Extracellular portion of the chain corresponds to 159–195 (QIPFAVNLPFCGPNVVDSIFCDLPLVTKLACIDIYFV). The chain crosses the membrane as a helical span at residues 196-219 (QVVIVANSGIISLSCFIILLISYS). Residues 220–235 (LILITIKNHSPTGQSK) lie on the Cytoplasmic side of the membrane. Residues 236–258 (ARSTLTAHITVVILFFGPCIFIY) traverse the membrane as a helical segment. The Extracellular segment spans residues 259–269 (IWPFGNHSVDK). An N-linked (GlcNAc...) asparagine glycan is attached at Asn264. Residues 270 to 289 (FLAVFYTIITPILNPIIYTL) form a helical membrane-spanning segment. Over 290–312 (RNKEMKISMKKLWRAFVNSREDT) the chain is Cytoplasmic.

Belongs to the G-protein coupled receptor 1 family.

Its subcellular location is the cell membrane. In terms of biological role, odorant receptor. In Homo sapiens (Human), this protein is Olfactory receptor 4K17 (OR4K17).